The sequence spans 443 residues: ATP-dependent protease ATPase subunit HslU (443 aa).

Residues Ile-18, 60–65, Asp-256, Glu-321, and Arg-393 each bind ATP; that span reads GVGKTE.

The protein belongs to the ClpX chaperone family. HslU subfamily. A double ring-shaped homohexamer of HslV is capped on each side by a ring-shaped HslU homohexamer. The assembly of the HslU/HslV complex is dependent on binding of ATP.

The protein localises to the cytoplasm. Functionally, ATPase subunit of a proteasome-like degradation complex; this subunit has chaperone activity. The binding of ATP and its subsequent hydrolysis by HslU are essential for unfolding of protein substrates subsequently hydrolyzed by HslV. HslU recognizes the N-terminal part of its protein substrates and unfolds these before they are guided to HslV for hydrolysis. The protein is ATP-dependent protease ATPase subunit HslU of Salmonella agona (strain SL483).